A 294-amino-acid polypeptide reads, in one-letter code: 4-hydroxy-tetrahydrodipicolinate synthase (294 aa).

Threonine 45 is a binding site for pyruvate. The Proton donor/acceptor role is filled by tyrosine 133. Lysine 162 serves as the catalytic Schiff-base intermediate with substrate. Position 204 (isoleucine 204) interacts with pyruvate.

The protein belongs to the DapA family. In terms of assembly, homotetramer; dimer of dimers.

The protein resides in the cytoplasm. The catalysed reaction is L-aspartate 4-semialdehyde + pyruvate = (2S,4S)-4-hydroxy-2,3,4,5-tetrahydrodipicolinate + H2O + H(+). It functions in the pathway amino-acid biosynthesis; L-lysine biosynthesis via DAP pathway; (S)-tetrahydrodipicolinate from L-aspartate: step 3/4. Its activity is regulated as follows. Is allosterically regulated by the feedback inhibitor (S)-lysine. Catalyzes the condensation of (S)-aspartate-beta-semialdehyde [(S)-ASA] and pyruvate to 4-hydroxy-tetrahydrodipicolinate (HTPA). This chain is 4-hydroxy-tetrahydrodipicolinate synthase, found in Agrobacterium fabrum (strain C58 / ATCC 33970) (Agrobacterium tumefaciens (strain C58)).